A 506-amino-acid chain; its full sequence is Maturase K (506 aa).

The protein belongs to the intron maturase 2 family. MatK subfamily.

The protein resides in the plastid. Its subcellular location is the chloroplast. Functionally, usually encoded in the trnK tRNA gene intron. Probably assists in splicing its own and other chloroplast group II introns. This chain is Maturase K, found in Medicago truncatula (Barrel medic).